An 82-amino-acid chain; its full sequence is Putative Fe(2+) transport protein A (82 aa).

The protein belongs to the FeoA family.

Its function is as follows. Might be involved in Fe(2+) ion uptake. The chain is Putative Fe(2+) transport protein A from Leptolyngbya boryana (Plectonema boryanum).